A 1053-amino-acid chain; its full sequence is LRR receptor-like serine/threonine-protein kinase GHR1 (1053 aa).

The N-terminal stretch at 1-18 is a signal peptide; that stretch reads MNLSRILLLSMFFLSAMG. At 19-630 the chain is on the extracellular side; that stretch reads QLPSQDIMAL…NKSTNKLVKV (612 aa). 13 LRR repeats span residues 73–93, 94–119, 121–141, 142–165, 166–189, 191–212, 213–237, 239–260, 262–285, 286–309, 310–333, 335–357, and 358–384; these read GVVL…FSNL, TKLV…SFKS, QFLD…IGRS, VSLR…MGGL, ISLQ…LTRL, DLLY…GFEL, ISSL…FFLL, NASY…LLPG, SESI…GFQL, FQNL…FNYV, YDLE…LLKG, SLLL…SIMS, and TTLH…CVLL. Asn92 carries N-linked (GlcNAc...) asparagine glycosylation. 2 positions are modified to phosphoserine; by HT1: Ser100 and Ser102. The N-linked (GlcNAc...) asparagine glycan is linked to Asn103. Phosphoserine; by HT1 is present on residues Ser105 and Ser126. Residues Asn146 and Asn153 are each glycosylated (N-linked (GlcNAc...) asparagine). Asn196 carries an N-linked (GlcNAc...) asparagine glycan. N-linked (GlcNAc...) asparagine glycosylation occurs at Asn239. Ser262 carries the phosphoserine; by HT1 modification. The N-linked (GlcNAc...) asparagine glycan is linked to Asn269. Ser278 carries the phosphoserine; by HT1 modification. Thr280 is modified (phosphothreonine; by HT1). A Phosphoserine; by HT1 modification is found at Ser281. Ser325 carries the phosphoserine; by HT1 modification. Asn347 carries an N-linked (GlcNAc...) asparagine glycan. A glycan (N-linked (GlcNAc...) asparagine) is linked at Asn394. LRR repeat units follow at residues 401–425, 426–449, 450–474, 476–498, 499–521, 522–546, 548–570, and 572–592; these read WENI…TPQL, LRAN…IPTH, YPKL…LLSM, TLEE…PSSG, SRIR…VFGS, LTNL…MNDI, SLSS…LSSN, and MAFN…LKNF. A Phosphotyrosine; by HT1 modification is found at Tyr406. At Ser410 the chain carries Phosphoserine; by HT1. At Thr415 the chain carries Phosphothreonine; by HT1. Ser417 is subject to Phosphoserine; by HT1. N-linked (GlcNAc...) asparagine glycosylation occurs at Asn432. Ser434 is subject to Phosphoserine; by HT1. 3 N-linked (GlcNAc...) asparagine glycosylation sites follow: Asn534, Asn566, and Asn575. Phosphoserine; by HT1 is present on residues Ser613, Ser614, and Ser616. Asn621 is a glycosylation site (N-linked (GlcNAc...) asparagine). A helical membrane pass occupies residues 631 to 651; sequence VIIVSCAVALIILILVAILLF. Over 652-1053 the chain is Cytoplasmic; that stretch reads CICKSRRREE…KTIYEDLSSI (402 aa). Residues 662-671 are compositionally biased toward basic and acidic residues; sequence RSITGKETNR. Residues 662–684 form a disordered region; that stretch reads RSITGKETNRRAQTIPSGSGGGM. A phosphothreonine; by HT1 mark is found at Thr669 and Thr675. A phosphoserine; by HT1 mark is found at Ser678, Ser680, Ser698, Ser699, and Ser700. Position 704 is a phosphoserine (Ser704). The residue at position 713 (Thr713) is a Phosphothreonine; by HT1. Phosphoserine; by HT1 occurs at positions 716 and 718. The residue at position 720 (Thr720) is a Phosphothreonine; by HT1. Phosphoserine; by HT1 occurs at positions 721, 724, and 760. Position 764 is a phosphothreonine; by HT1 (Thr764). The residue at position 769 (Ser769) is a Phosphoserine; by HT1. In terms of domain architecture, Protein kinase spans 770–1053; it reads RAPAEVLGRS…KTIYEDLSSI (284 aa). ATP-binding positions include 776–784 and Lys798; that span reads LGRSSHGTS. Phosphothreonine; by HT1 is present on residues Thr928 and Thr1010. At Ser1015 the chain carries Phosphoserine; by HT1. Position 1045 is a phosphothreonine; by HT1 (Thr1045). Phosphotyrosine; by HT1 is present on Tyr1047. A phosphoserine; by HT1 mark is found at Ser1051 and Ser1052.

This sequence belongs to the protein kinase superfamily. Ser/Thr protein kinase family. As to quaternary structure, interacts with SLAC1 (via N-terminus). Binds to ABI2, but not ABI1. Interacts with CPK3. Post-translationally, phosphorylated by HT1; this phosphorylation is inhibited by MPK12 and MPK4. In terms of tissue distribution, expressed in guard cells and in the vasculature of roots and leaves.

It is found in the cell membrane. It catalyses the reaction L-seryl-[protein] + ATP = O-phospho-L-seryl-[protein] + ADP + H(+). The enzyme catalyses L-threonyl-[protein] + ATP = O-phospho-L-threonyl-[protein] + ADP + H(+). With respect to regulation, negatively regulated by ABI2. In terms of biological role, receptor kinase acting as an early component in abscisic acid (ABA) signaling. Required for darkness, ABA, high CO(2) and hydrogen peroxide (H(2)O(2)) induction of S-type anion currents in guard cells leading to stomatal closure, possibly via the phosphorylation and activation of the anion channel SLAC1 and as a scaffolding component. Seems to act in parallel with SRK2E/OST1 in the ABA signaling pathway which regulates stomatal movement. Binds ATP. Involved in the local and/or systemic stomatal responses (e.g. stomatal closure) to light stress. This Arabidopsis thaliana (Mouse-ear cress) protein is LRR receptor-like serine/threonine-protein kinase GHR1.